The primary structure comprises 154 residues: 3-hydroxyacyl-[acyl-carrier-protein] dehydratase FabZ (154 aa).

The active site involves histidine 54.

This sequence belongs to the thioester dehydratase family. FabZ subfamily.

The protein localises to the cytoplasm. The enzyme catalyses a (3R)-hydroxyacyl-[ACP] = a (2E)-enoyl-[ACP] + H2O. Its function is as follows. Involved in unsaturated fatty acids biosynthesis. Catalyzes the dehydration of short chain beta-hydroxyacyl-ACPs and long chain saturated and unsaturated beta-hydroxyacyl-ACPs. This chain is 3-hydroxyacyl-[acyl-carrier-protein] dehydratase FabZ, found in Chlamydia abortus (strain DSM 27085 / S26/3) (Chlamydophila abortus).